The chain runs to 501 residues: 2-isopropylmalate synthase (501 aa).

In terms of domain architecture, Pyruvate carboxyltransferase spans 7–269 (VRIFDTTLRD…QTQIKTEEIA (263 aa)). Mn(2+) is bound by residues aspartate 16, histidine 204, histidine 206, and asparagine 240. A regulatory domain region spans residues 394–501 (QLEGFTVSTG…RAYISALNRL (108 aa)).

The protein belongs to the alpha-IPM synthase/homocitrate synthase family. LeuA type 1 subfamily. As to quaternary structure, homodimer. It depends on Mn(2+) as a cofactor.

The protein localises to the cytoplasm. The catalysed reaction is 3-methyl-2-oxobutanoate + acetyl-CoA + H2O = (2S)-2-isopropylmalate + CoA + H(+). Its pathway is amino-acid biosynthesis; L-leucine biosynthesis; L-leucine from 3-methyl-2-oxobutanoate: step 1/4. Its function is as follows. Catalyzes the condensation of the acetyl group of acetyl-CoA with 3-methyl-2-oxobutanoate (2-ketoisovalerate) to form 3-carboxy-3-hydroxy-4-methylpentanoate (2-isopropylmalate). The sequence is that of 2-isopropylmalate synthase from Leptospira interrogans serogroup Icterohaemorrhagiae serovar copenhageni (strain Fiocruz L1-130).